Consider the following 329-residue polypeptide: MILSQQKYNYLAKVSDSNGVISALAFDQRGALKCLMAQYQMKEPTVAQMEELKVLVSEELTPYASSILLDPEYGLPAAQARDREAGLLLAYEKTGYDANTTSRLPDCLVDWSIKRLKEAGADAVKFLLYYDVDGDPQVNVQKQAYIERIGSECQAEDIPFFLEILTYDETISNNSSVEFAKVKVHKVNDAMKVFSAERFGIDVLKVEVPVNMVYVEGFAEGEVVYSKEEAAQAFREQEASTDLPYIYLSAGVSAELFQETLVFAHKAGAKFNGVLCGRATWAGSVQVYMEEGKEAARQWLRTSGLQNINELNKVLKTTASPWTEKVSVG.

The protein belongs to the aldolase LacD family.

The enzyme catalyses D-tagatofuranose 1,6-bisphosphate = D-glyceraldehyde 3-phosphate + dihydroxyacetone phosphate. It participates in carbohydrate metabolism; D-tagatose 6-phosphate degradation; D-glyceraldehyde 3-phosphate and glycerone phosphate from D-tagatose 6-phosphate: step 2/2. This is Tagatose 1,6-diphosphate aldolase 2 (lacD2) from Streptococcus mutans serotype c (strain ATCC 700610 / UA159).